A 180-amino-acid chain; its full sequence is D(1A) dopamine receptor (180 aa).

The helical transmembrane segment at 1–10 (NTLLVCAAVI) threads the bilayer. The Cytoplasmic portion of the chain corresponds to 11–21 (RFRHLRSKVTN). Residues 22 to 48 (FFVISLAVSDLLVAVLVMPWKAVAEIA) form a helical membrane-spanning segment. The Extracellular segment spans residues 49 to 57 (GFWPFGSFC). A disulfide bridge links Cys57 with Cys147. Residues 58-80 (NIWVAFDIMCSTASILNLCVISV) form a helical membrane-spanning segment. At 81 to 99 (DRYWAISSPFRYERKMTPK) the chain is on the cytoplasmic side. Residues 100 to 124 (AAFILIGVAWTLSVLISFIPVQLSW) traverse the membrane as a helical segment. The Extracellular segment spans residues 125–153 (HKAKPTSPPDGNATSLDETVDNCDSSLSR). Asn136 is a glycosylation site (N-linked (GlcNAc...) asparagine). Residues 154 to 179 (TYSISSSLVNFYNPVAIMXVTYTRIH) traverse the membrane as a helical segment. Residue Arg180 is a topological domain, cytoplasmic.

It belongs to the G-protein coupled receptor 1 family. In terms of assembly, interacts with DNAJC14 via its C-terminus. Interacts with DRD2. Interacts with DORIP1.

The protein resides in the cell membrane. The protein localises to the endoplasmic reticulum membrane. It localises to the cell projection. It is found in the cilium membrane. Dopamine receptor whose activity is mediated by G proteins which activate adenylyl cyclase. The protein is D(1A) dopamine receptor (DRD1) of Oryctolagus cuniculus (Rabbit).